The chain runs to 297 residues: Acetaldehyde dehydrogenase (297 aa).

The active-site Acyl-thioester intermediate is C128. NAD(+) contacts are provided by residues 159-167 (SAGPGTRQN) and N272.

This sequence belongs to the acetaldehyde dehydrogenase family.

The enzyme catalyses acetaldehyde + NAD(+) + CoA = acetyl-CoA + NADH + H(+). This Desulfitobacterium hafniense (strain DSM 10664 / DCB-2) protein is Acetaldehyde dehydrogenase.